A 477-amino-acid polypeptide reads, in one-letter code: Angiotensinogen (477 aa).

The N-terminal stretch at 1–24 (MTPTGAGLKATIFCILTWVSLTAG) is a signal peptide. Cys42 and Cys161 are disulfide-bonded. N-linked (GlcNAc...) asparagine glycans are attached at residues Asn295 and Asn319.

Belongs to the serpin family. In response to low blood pressure, the enzyme renin/REN cleaves angiotensinogen to produce angiotensin-1. Angiotensin-1 is a substrate of ACE (angiotensin converting enzyme) that removes a dipeptide to yield the physiologically active peptide angiotensin-2. Angiotensin-1 and angiotensin-2 can be further processed to generate angiotensin-3, angiotensin-4. Angiotensin 1-9 is cleaved from angiotensin-1 by ACE2 and can be further processed by ACE to produce angiotensin 1-7, angiotensin 1-5 and angiotensin 1-4. Angiotensin 1-7 has also been proposed to be cleaved from angiotensin-2 by ACE2 or from angiotensin-1 by MME (neprilysin). Post-translationally, the disulfide bond is labile. Angiotensinogen is present in the circulation in a near 40:60 ratio with the oxidized disulfide-bonded form, which preferentially interacts with receptor-bound renin.

The protein resides in the secreted. Functionally, essential component of the renin-angiotensin system (RAS), a potent regulator of blood pressure, body fluid and electrolyte homeostasis. Acts directly on vascular smooth muscle as a potent vasoconstrictor, affects cardiac contractility and heart rate through its action on the sympathetic nervous system, and alters renal sodium and water absorption through its ability to stimulate the zona glomerulosa cells of the adrenal cortex to synthesize and secrete aldosterone. Acts by binding to angiotensin receptors AGTR1 and AGTR2. Also binds the DEAR/FBXW7-AS1 receptor. In terms of biological role, stimulates aldosterone release. Its function is as follows. Is a ligand for the G-protein coupled receptor MAS1. Has vasodilator and antidiuretic effects. Has an antithrombotic effect that involves MAS1-mediated release of nitric oxide from platelets. This is Angiotensinogen (Agt) from Rattus norvegicus (Rat).